The primary structure comprises 39 residues: LIM/homeobox protein xLIM-2B (39 aa).

The segment at residues 1 to 39 (KAKQLETLKAAFAATPKPTRHIREQLAQETGLNMRVIQV) is a DNA-binding region (homeobox).

It localises to the nucleus. The protein is LIM/homeobox protein xLIM-2B (lim2b) of Xenopus laevis (African clawed frog).